The sequence spans 355 residues: MKKILIMAGGTGGHVFPGLALAEALADKQVKTVWLGTCNGMEKQWVDAAKIPFYTIAISGLRGNGLLGWLKAPFNVFKAWRQARYIIQQEAPDLVLGMGGFVCGPGGLAALSLNKPLVLHEQNATPGLTNKLLAPFAKKVICAFPQSTIKGKQVTVIGNPVRSGLESLPVVKAHSPRHLLVLGGSRGALALNEMVPEALSLLPEEQRPQVIHQTGQKTLQQAMSSYEAANVAADVVPFIDDMVSAYQQADLVVCRSGALTVSELMAAARPAILVPFPYAVDDHQTANAQALVDLNGGEVLQQADMTSELLAERLQFWMADKRCETASRSIRESAPHSAKEKIVDELLTLCDSSVH.

UDP-N-acetyl-alpha-D-glucosamine-binding positions include 11–13 (TGG), N123, R162, S185, I239, 258–263 (ALTVSE), and Q284.

Belongs to the glycosyltransferase 28 family. MurG subfamily.

Its subcellular location is the cell inner membrane. It carries out the reaction di-trans,octa-cis-undecaprenyl diphospho-N-acetyl-alpha-D-muramoyl-L-alanyl-D-glutamyl-meso-2,6-diaminopimeloyl-D-alanyl-D-alanine + UDP-N-acetyl-alpha-D-glucosamine = di-trans,octa-cis-undecaprenyl diphospho-[N-acetyl-alpha-D-glucosaminyl-(1-&gt;4)]-N-acetyl-alpha-D-muramoyl-L-alanyl-D-glutamyl-meso-2,6-diaminopimeloyl-D-alanyl-D-alanine + UDP + H(+). It functions in the pathway cell wall biogenesis; peptidoglycan biosynthesis. Functionally, cell wall formation. Catalyzes the transfer of a GlcNAc subunit on undecaprenyl-pyrophosphoryl-MurNAc-pentapeptide (lipid intermediate I) to form undecaprenyl-pyrophosphoryl-MurNAc-(pentapeptide)GlcNAc (lipid intermediate II). The polypeptide is UDP-N-acetylglucosamine--N-acetylmuramyl-(pentapeptide) pyrophosphoryl-undecaprenol N-acetylglucosamine transferase (Hydrogenovibrio crunogenus (strain DSM 25203 / XCL-2) (Thiomicrospira crunogena)).